We begin with the raw amino-acid sequence, 431 residues long: SH2 domain-containing protein 4B (431 aa).

The disordered stretch occupies residues 201-235 (QASENEEREWEEQLRRSKAADEERSRRAQRARDEY). Basic and acidic residues predominate over residues 211 to 235 (EEQLRRSKAADEERSRRAQRARDEY). The 93-residue stretch at 325-417 (WFHGIISRES…SGGELLQEPC (93 aa)) folds into the SH2 domain.

This Mus musculus (Mouse) protein is SH2 domain-containing protein 4B (Sh2d4b).